The chain runs to 256 residues: MLKIAVLLSVLACALAGTIPDGLLPQLDGRIVGGYETSIDAHPYQVSLQRFGSHFCGGSIYSHDIVITAAHCLQSVDAKDLKIRVGSTYWRSGGSVHSVRSFRNHEGYNARTMVNDIAIVRIESDLSFRSSIRAVRIADHNPREGATAVVSGWGTTESGGSTIPDHLLAVDLEIVDVSRCRSGEFGYGKKIKDTMLCAYAPNKDACQGDSGGPLVSGDRLVGVVSWGYGCGDVRYPGVYADVAHFHEWIERTAREV.

Residues 1 to 22 (MLKIAVLLSVLACALAGTIPDG) form the signal peptide. Residues 23 to 30 (LLPQLDGR) constitute a propeptide, activation peptide. One can recognise a Peptidase S1 domain in the interval 31–254 (IVGGYETSID…FHEWIERTAR (224 aa)). A disulfide bridge links Cys-56 with Cys-72. Catalysis depends on charge relay system residues His-71 and Asp-116. 2 disulfide bridges follow: Cys-180–Cys-197 and Cys-206–Cys-230. Ser-210 serves as the catalytic Charge relay system.

The protein belongs to the peptidase S1 family.

It is found in the secreted. It localises to the extracellular space. It carries out the reaction Preferential cleavage: Arg-|-Xaa, Lys-|-Xaa.. The sequence is that of Trypsin epsilon (epsilonTry) from Drosophila erecta (Fruit fly).